Reading from the N-terminus, the 196-residue chain is MHMEEHTLNQMSDELKLMLGRFRHEQFVEKLGWRLPAHPSQAGCEWDQYDTEHARYLLAFNEDRAIVGCARLIPTTFPNLLEGVFGHTCAGAPPKHPAIWEMTRFTTREPQLAMPLFWRSLKTASLAGADAIVGIVNSTMERYYKINGVHYERLGPVTVHQNEKILAIKLSAHREHHRSAVAPSAFMSDTLLRETA.

The protein belongs to the autoinducer synthase family.

It catalyses the reaction a fatty acyl-[ACP] + S-adenosyl-L-methionine = an N-acyl-L-homoserine lactone + S-methyl-5'-thioadenosine + holo-[ACP] + H(+). Its function is as follows. Required for the synthesis of a yet unknown N-aceyl-homoserine lactone (N-aceyl-HSL), an autoinducer molecule which binds to PhzR and thus regulates phenazine production. The chain is Acyl-homoserine-lactone synthase (phzI) from Pseudomonas chlororaphis (Pseudomonas aureofaciens).